The sequence spans 265 residues: tRNA pseudouridine synthase A (265 aa).

The Nucleophile role is filled by Asp-58. Tyr-116 is a substrate binding site.

It belongs to the tRNA pseudouridine synthase TruA family. In terms of assembly, homodimer.

It carries out the reaction uridine(38/39/40) in tRNA = pseudouridine(38/39/40) in tRNA. Functionally, formation of pseudouridine at positions 38, 39 and 40 in the anticodon stem and loop of transfer RNAs. This Neisseria meningitidis serogroup B (strain ATCC BAA-335 / MC58) protein is tRNA pseudouridine synthase A.